The following is a 66-amino-acid chain: Large ribosomal subunit protein bL35 (66 aa).

Belongs to the bacterial ribosomal protein bL35 family.

This is Large ribosomal subunit protein bL35 from Borreliella afzelii (strain PKo) (Borrelia afzelii).